Here is a 336-residue protein sequence, read N- to C-terminus: 3-isopropylmalate dehydrogenase (336 aa).

Arg87, Arg97, Arg121, and Asp211 together coordinate substrate. Mg(2+)-binding residues include Asp211, Asp235, and Asp239. Residue Gly271–Asp283 coordinates NAD(+).

Belongs to the isocitrate and isopropylmalate dehydrogenases family. LeuB type 2 subfamily. As to quaternary structure, homodimer. Mg(2+) is required as a cofactor. It depends on Mn(2+) as a cofactor.

It is found in the cytoplasm. It catalyses the reaction (2R,3S)-3-isopropylmalate + NAD(+) = 4-methyl-2-oxopentanoate + CO2 + NADH. It participates in amino-acid biosynthesis; L-leucine biosynthesis; L-leucine from 3-methyl-2-oxobutanoate: step 3/4. In terms of biological role, catalyzes the oxidation of 3-carboxy-2-hydroxy-4-methylpentanoate (3-isopropylmalate) to 3-carboxy-4-methyl-2-oxopentanoate. The product decarboxylates to 4-methyl-2 oxopentanoate. The protein is 3-isopropylmalate dehydrogenase of Mycolicibacterium gilvum (strain PYR-GCK) (Mycobacterium gilvum (strain PYR-GCK)).